The following is a 446-amino-acid chain: D(3) dopamine receptor (446 aa).

The Extracellular segment spans residues 1–32 (MAPLSQISSHINSTCGAENSTGVNRARPHAYY). 2 N-linked (GlcNAc...) asparagine glycosylation sites follow: N12 and N19. The helical transmembrane segment at 33–55 (ALSYCALILAIIFGNGLVCAAVL) threads the bilayer. The Cytoplasmic portion of the chain corresponds to 56–65 (RERALQTTTN). The chain crosses the membrane as a helical span at residues 66–88 (YLVVSLAVADLLVATLVMPWVVY). At 89–104 (LEVTGGVWNFSRICCD) the chain is on the extracellular side. N97 carries an N-linked (GlcNAc...) asparagine glycan. A disulfide bridge links C103 with C181. The chain crosses the membrane as a helical span at residues 105–126 (VFVTLDVMMCTASILNLCAISI). At 127–149 (DRYTAVVMPVHYQHGTGQSSCRR) the chain is on the cytoplasmic side. Residues 150-170 (VALMITAVWVLAFAVSCPLLF) form a helical membrane-spanning segment. Residues 171 to 187 (GFNTTGDPSICSISNPD) lie on the Extracellular side of the membrane. N173 carries N-linked (GlcNAc...) asparagine glycosylation. Residues 188 to 209 (FVIYSSVVSFYVPFGVTVLVYA) traverse the membrane as a helical segment. At 210–375 (RIYMVLRQRR…VPLREKKATQ (166 aa)) the chain is on the cytoplasmic side. The helical transmembrane segment at 376 to 397 (MVVIVLGAFIVCWLPFFLTHVL) threads the bilayer. Over 398-412 (NTHCQACHVSPELYR) the chain is Extracellular. Residues C401 and C404 are joined by a disulfide bond. Residues 413 to 432 (ATTWLGYVNSALNPVIYTTF) traverse the membrane as a helical segment. The Cytoplasmic portion of the chain corresponds to 433-446 (NIEFRKAFLKILSC).

Belongs to the G-protein coupled receptor 1 family. Interacts with CLIC6. Interacts with GRK4. Interacts with PALM. Interacts with FLNA (via filamin repeat 21); increases PKA-mediated phosphorylation of FLNA. Post-translationally, phosphorylated by GRK4. Palmitoylated.

It is found in the cell membrane. Dopamine receptor whose activity is mediated by G proteins which inhibit adenylyl cyclase. Promotes cell proliferation. The protein is D(3) dopamine receptor (Drd3) of Mus musculus (Mouse).